A 267-amino-acid chain; its full sequence is Phosphate import ATP-binding protein PstB 1 (267 aa).

Positions 21–262 (LETKDLHVYY…AALQSTSDYV (242 aa)) constitute an ABC transporter domain. 53–60 (GPSGCGKS) provides a ligand contact to ATP.

The protein belongs to the ABC transporter superfamily. Phosphate importer (TC 3.A.1.7) family. As to quaternary structure, the complex is composed of two ATP-binding proteins (PstB), two transmembrane proteins (PstC and PstA) and a solute-binding protein (PstS).

The protein localises to the cell membrane. It catalyses the reaction phosphate(out) + ATP + H2O = ADP + 2 phosphate(in) + H(+). Part of the ABC transporter complex PstSACB involved in phosphate import. Responsible for energy coupling to the transport system. The sequence is that of Phosphate import ATP-binding protein PstB 1 from Streptococcus thermophilus (strain CNRZ 1066).